Here is a 545-residue protein sequence, read N- to C-terminus: Esterase-5B (545 aa).

An N-terminal signal peptide occupies residues 1-19 (MYCAKLILLLGCFWISSSA). Cys-84 and Cys-103 are joined by a disulfide. A glycan (N-linked (GlcNAc...) asparagine) is linked at Asn-113. The active-site Acyl-ester intermediate is the Ser-207. Cys-259 and Cys-271 are disulfide-bonded. Asn-421 carries an N-linked (GlcNAc...) asparagine glycan. The active-site Charge relay system is the His-467. Asn-507 is a glycosylation site (N-linked (GlcNAc...) asparagine). The cysteines at positions 515 and 536 are disulfide-linked.

This sequence belongs to the type-B carboxylesterase/lipase family. In terms of assembly, homodimer.

The protein localises to the secreted. It carries out the reaction a carboxylic ester + H2O = an alcohol + a carboxylate + H(+). This is Esterase-5B (Est-5B) from Drosophila persimilis (Fruit fly).